A 106-amino-acid polypeptide reads, in one-letter code: Iron-sulfur cluster assembly protein CyaY (106 aa).

It belongs to the frataxin family.

Involved in iron-sulfur (Fe-S) cluster assembly. May act as a regulator of Fe-S biogenesis. This is Iron-sulfur cluster assembly protein CyaY from Yersinia pestis bv. Antiqua (strain Antiqua).